A 1148-amino-acid chain; its full sequence is Envelopment polyprotein (1148 aa).

An N-terminal signal peptide occupies residues 1–23 (MGELSPVCLYLLLQGLLLCNTGA). The Lumenal portion of the chain corresponds to 24 to 495 (ARNLNELKME…VPGLHGWATM (472 aa)). Cystine bridges form between Cys-34/Cys-159, Cys-68/Cys-165, Cys-117/Cys-136, Cys-141/Cys-146, Cys-183/Cys-193, and Cys-218/Cys-257. An N-linked (GlcNAc...) asparagine; by host glycan is attached at Asn-142. N-linked (GlcNAc...) asparagine; by host glycosylation occurs at Asn-357. Cystine bridges form between Cys-386–Cys-445, Cys-390–Cys-399, Cys-415–Cys-434, and Cys-462–Cys-485. A glycan (N-linked (GlcNAc...) asparagine; by host) is linked at Asn-409. The chain crosses the membrane as a helical span at residues 496 to 516 (LLLLTLCFGWVLIPTITMILL). At 517–637 (KILIAFAYLC…LSLFRYRSRF (121 aa)) the chain is on the cytoplasmic side. The segment at 526-543 (CSKYNTDSKFRILIEKVK) is binding to the ribonucleoprotein. 2 CCHC-type zinc fingers span residues 555 to 575 (CEVC…RKSC) and 580 to 601 (CPYC…FKVC). Binding to the ribonucleoprotein regions lie at residues 598-615 (FKVC…RKSL), 602-613 (KLTSRFQENLRK), and 621-635 (MQGC…RYRS). The region spanning 621–644 (MQGCYRTLSLFRYRSRFFVGLVWC) is the ITAM domain. The YxxL motif lies at 625-628 (YRTL). Residues 638–658 (FVGLVWCVLLVLELIVWAASA) form a helical membrane-spanning segment. At 659–1114 (ETQNLNAGWT…EWILGVLNGN (456 aa)) the chain is on the lumenal side. 8 disulfide bridges follow: Cys-745/Cys-780, Cys-749/Cys-787, Cys-761/Cys-894, Cys-775/Cys-905, Cys-790/Cys-913, Cys-816/Cys-825, Cys-833/Cys-842, and Cys-873/Cys-877. Positions 767-787 (YEYETGWGCNPPDCPGVGTGC) are fusion loop. A glycan (N-linked (GlcNAc...) asparagine; by host) is linked at Asn-937. Intrachain disulfides connect Cys-979-Cys-1009, Cys-1002-Cys-1054, Cys-1019-Cys-1024, Cys-1055-Cys-1060, and Cys-1094-Cys-1098. The chain crosses the membrane as a helical span at residues 1115–1135 (WMVVAVLVVLLILSILLFTLC). Binding to the ribonucleoprotein regions lie at residues 1131–1143 (LFTL…PSYR) and 1131–1148 (LFTL…EHKP). The Cytoplasmic segment spans residues 1136–1148 (CPRRPSYRKEHKP).

The protein belongs to the hantavirus envelope glycoprotein family. In terms of assembly, homodimer. Homotetramer; forms heterotetrameric Gn-Gc spikes in the pre-fusion conformation. Interacts (via C-terminus) with the nucleoprotein. Interacts with host TUFM; this interaction contributes to the virus-induced degradation of mitochondria by autophagy, which leads to degradation of host MAVS and inhibition of type I interferon (IFN) responses. Interacts with host MAP1LC3B; this interaction contributes to the virus-induced degradation of mitochondria by autophagy, which leads to degradation of host MAVS and inhibition of type I interferon (IFN) responses. Homodimer. Homotetramer; forms heterotetrameric Gn-Gc spikes in the pre-fusion conformation. Homotrimer; forms homotrimer in the post-fusion conformation at acidic pH. Interacts (via C-terminus) with the nucleoprotein. Post-translationally, envelope polyprotein precursor is quickly cleaved in vivo just after synthesis, presumably by host signal peptidase.

It is found in the virion membrane. The protein localises to the host cell surface. Its subcellular location is the host Golgi apparatus membrane. It localises to the host endoplasmic reticulum membrane. The protein resides in the host mitochondrion. In terms of biological role, forms homotetramers with glycoprotein C at the surface of the virion. Attaches the virion to host cell receptors including integrin ITGAV/ITGB3. This attachment induces virion internalization predominantly through clathrin-dependent endocytosis. Mediates the assembly and budding of infectious virus particles through its interaction with the nucleocapsid protein and the viral genome. May dysregulate normal immune and endothelial cell responses through an ITAM motif. Translocates to mitochondria, binds to host TUFM and recruits MAP1LC3B. These interactions induce mitochondrial autophagy and therefore destruction of host MAVS leading to inhibition of type I interferon (IFN) responses. Concomitant breakdown of glycoprotein N is apparently prevented by the nucleoprotein that may inhibit Gn-stimulated autophagosome-lysosome fusion. Interacts with the viral genomic RNA. Functionally, forms homotetramers with glycoprotein N at the surface of the virion. Attaches the virion to host cell receptors including integrin ITGAV/ITGB3. This attachment induces virion internalization predominantly through clathrin-dependent endocytosis. Class II fusion protein that promotes fusion of viral membrane with host endosomal membrane after endocytosis of the virion. The chain is Envelopment polyprotein (GP) from Puumala virus (strain K27).